The primary structure comprises 94 residues: Dynein light chain, cytoplasmic (94 aa).

It belongs to the dynein light chain family. In terms of assembly, homodimer. Cytoplasmic dynein consists of two catalytic heavy chains (HCs) and a number of non-catalytic subunits which present intermediate chains (ICs), light intermediate chains (LICs) and light chains (LCs). Component of the nuclear pore complex (NPC). The nuclear pore complex constitutes the exclusive means of nucleocytoplasmic transport. NPCs allow the passive diffusion of ions and small molecules and the active, nuclear transport receptor-mediated bidirectional transport of macromolecules such as proteins, RNAs, ribonucleoparticles (RNPs), and ribosomal subunits across the nuclear envelope. Due to its 8-fold rotational symmetry, all subunits are present with 8 copies or multiples thereof.

The protein localises to the cytoplasm. It is found in the cytoskeleton. It localises to the nucleus. The protein resides in the nuclear pore complex. Acts as one of several non-catalytic accessory components of the cytoplasmic dynein complex that are thought to be involved in linking dynein to cargos and to adapter proteins that regulate dynein function. Cytoplasmic dynein 1 acts as a motor for the intracellular retrograde motility of vesicles and organelles along microtubules. May play a role in changing or maintaining the spatial distribution of cytoskeletal structures. Also a component of the nuclear pore complex. In Emericella nidulans (strain FGSC A4 / ATCC 38163 / CBS 112.46 / NRRL 194 / M139) (Aspergillus nidulans), this protein is Dynein light chain, cytoplasmic (nudG).